The sequence spans 309 residues: L-aminoadipate-semialdehyde dehydrogenase-phosphopantetheinyl transferase (309 aa).

CoA-binding positions include Arg-47, 86-91 (RTAKGK), and 108-111 (NISH). Mg(2+) contacts are provided by Asp-129 and Glu-181. 181 to 185 (ESFIK) serves as a coordination point for CoA. Phosphoserine is present on Ser-258.

It belongs to the P-Pant transferase superfamily. AcpS family. As to quaternary structure, monomer. It depends on Mg(2+) as a cofactor. As to expression, detected in heart, skeletal muscle, placenta, testis, brain, pancreas, liver and kidney.

The protein resides in the cytoplasm. The protein localises to the cytosol. The enzyme catalyses apo-[ACP] + CoA = holo-[ACP] + adenosine 3',5'-bisphosphate + H(+). It catalyses the reaction apo-[ACP] + acetyl-CoA = acetyl-[ACP] + adenosine 3',5'-bisphosphate + H(+). Its function is as follows. Catalyzes the post-translational modification of target proteins by phosphopantetheine. Can transfer the 4'-phosphopantetheine moiety from coenzyme A, regardless of whether the CoA is presented in the free thiol form or as an acetyl thioester, to a serine residue of a broad range of acceptors including the acyl carrier domain of FASN. The chain is L-aminoadipate-semialdehyde dehydrogenase-phosphopantetheinyl transferase (AASDHPPT) from Homo sapiens (Human).